Here is a 190-residue protein sequence, read N- to C-terminus: Histone-arginine methyltransferase METTL23 (190 aa).

Belongs to the methyltransferase superfamily. METTL23 family. In terms of assembly, interacts with HSPA5, HSP90B1, TUBULIN, UGGT1 and UGGT2. Interacts with TET3. Interacts with STPG4.

It localises to the nucleus. It is found in the cytoplasm. It carries out the reaction L-arginyl-[protein] + 2 S-adenosyl-L-methionine = N(omega),N(omega)-dimethyl-L-arginyl-[protein] + 2 S-adenosyl-L-homocysteine + 2 H(+). Functionally, histone methyltransferase that dimethylates histone H3 at 'Arg-17', forming asymmetric dimethylarginine (H3R17me2a), leading to activate transcription via chromatin remodeling. Maternal factor involved in epigenetic chromatin reprogramming of the paternal genome in the zygote: mediates H3R17me2a, promoting histone H3.3 incorporation in the male pronucleus, leading to TET3 recruitment and subsequent DNA demethylation. This chain is Histone-arginine methyltransferase METTL23, found in Homo sapiens (Human).